A 77-amino-acid chain; its full sequence is Large ribosomal subunit protein bL28 (77 aa).

The protein belongs to the bacterial ribosomal protein bL28 family.

This is Large ribosomal subunit protein bL28 from Karelsulcia muelleri (strain GWSS) (Sulcia muelleri).